The primary structure comprises 2193 residues: MGSQVSTQRSGSHENSNSASEGSTINYTTINYYKDAYAASAGRQDMSQDPKKFTDPVMDVIHEMAPPLKSPSAEACGYSDRVAQLTIGNSTITTQEAANIVIAYGEWPEYCPDTDATAVDKPTRPDVSVNRFFTLDTKSWAKDSKGWYWKFPDVLTEVGVFGQNAQFHYLYRSGFCVHVQCNASKFHQGALLVAVLPEYVLGTIAGGTGNENSHPPYATTQPGQVGAVLTHPYVLDAGIPLSQLTVCPHQWINLRTNNCATIIVPYMNTVPFDSALNHCNFGLLVVPVVPLDFNAGATSEIPITVTIAPMCAEFAGLRQAVKQGIPTELKPGTNQFLTTDDGVSAPILPGFHPTPPIHIPGEVHNLLEICRVETILEVNNLKTNETTPMQRLCFPVSVQSKTGELCAAFRADPGRDGPWQSTILGQLCRYYTQWSGSLEVTFMFAGSFMATGKMLIAYTPPGGNVPADRITAMLGTHVIWDFGLQSSVTLVVPWISNTHYRAHARAGYFDYYTTGIITIWYQTNYVVPIGAPTTAYIVALAAAQDNFTMKLCKDTEDIEQTANIQGDPIADMIDQTVNNQVNRSLTALQVLPTAADTEASSHRLGTGVVPALQAAETGASSNASDKNLIETRCVLNHHSTQETAIGNFFSRAGLVSIITMPTTGTQNTDGYVNWDIDLMGYAQLRRKCELFTYMRFDAEFTFVVAKPNGELVPQLLQYMYVPPGAPKPTSRDSFAWQTATNPSVFVKMTDPPAQVSVPFMSPASAYQWFYDGYPTFGEHLQANDLDYGQCPNNMMGTFSIRTVGTEKSPHSITLRVYMRIKHVRAWIPRPLRNQPYLFKTNPNYKGNDIKCTSTSRDKITTLGKFGQQSGAIYVGNYRVVNRHLATHNDWANLVWEDSSRDLLVSSTTAQGCDTIARCNCQTGVYYCSSKRKHYPVSFTKPSLIFVEASEYYPARYQSHLMLAVGHSEPGDCGGILRCQHGVVGIVSTGGNGLVGFADVRDLLWLDEEAMEQGVSDYIKGLGDAFGVGFTDAVSREVEALKNHLIGSEGAVEKILKNLVKLISALVIVVRSDYDMVTLTATLALIGCHGSPWAWIKAKTASILGIPIVQKQSASWLKKFNDMANAAKGLEWISSKISKFIDWLKEKIIPAAKEKVEFLNNLKQLPLLENQISNLEQSAASQEDLEAMFGNVSYLAHFCRKFQPLYATEAKRVYALEKRMNNYMQFKSKHRIEPVCLIIRGSPGTGKSLATGIIARAIADKYHSSVYSLPPDPDHFDGYKQQVVTVMDDLCQNPDGKDMSLFCQMVSTVDFIPPMASLEEKGVSFTSKFVIASTNASNIVVPTVSDSDAIRRRFYMDCDIEVTDSYKTDLGRLDAGRAAKLCTENNTANFKRCSPLVCGKAIQLRDRKSKVRYSIDTVVSELIREYNNRSAIGNTIEALFQGPLKFKPIRISLEEKPAPDAISDLLASVDSEEVRQYCREQGWIIPETPTNVERHLNRAVLVMQSIATVVAVVSLVYVIYKLFAGFQGAYSGAPKQALKKPVLRTATVQGPSLDFALSLLRRNIRQVQTDQGHFTMLGVRDRLAILPRHSQPGKTIWVEHKLINVLDAVELVDEQGVNLELTLVTLDTNEKFRDVTKFIPETITGASDATLVINTEHMPSMFVPVGDVVQYGFLNLSGKPTHRTMMYNFPTKAGQCGGVVTSVGKIIGIHIGGNGRQGFCAGLKRGYFASEQGEIQWMKPNKETGRLNINGPTRTKLEPSVFHDVFEGNKEPAVLTSKDPRLEVDFEQALFSKYVGNTLHEPDEYVTQAALHYANQLKQLDININKMSMEEACYGTEYLEAIDLHTSAGYPYSALGVKKRDILDPITRDTTKMKFYMDKYGLDLPYSTYVKDELRSLDKIKKGKSRLIEASSLNDSVYLRMTFGHLYETFHANPGTVTGSAVGCNPDVFWSKLPILLPGSLFAFDYSGYDASLSPVWFRALEVVLREIGYSEEAVSLIEGINHTHHVYRNKTYCVLGGMPSGCSGTSIFNSMINNIIIRTLLIKTFKGIDLDELNMVAYGDDVLASYPFPIDCSELAKTGKEYGLTMTPADKSPCFNEVTWENATFLKRGFLPDHQFPFLIHPTMPMREIHESIRWTKDARNTQDHVRSLCLLAWHNGKEEYEKFVSTIRSVPIGKALAIPNFENLRRNWLELF.

A disordered region spans residues 1–23 (MGSQVSTQRSGSHENSNSASEGS). Residue Gly2 is the site of N-myristoyl glycine; by host attachment. At 2-1503 (GSQVSTQRSG…HLNRAVLVMQ (1502 aa)) the chain is on the cytoplasmic side. Residues 566 to 588 (GDPIADMIDQTVNNQVNRSLTAL) form an amphipathic alpha-helix region. Active-site for protease 2A activity residues include His883 and Asp901. Residues Cys918 and Cys920 each contribute to the Zn(2+) site. Cys972 serves as the catalytic For protease 2A activity. Cys978 and His980 together coordinate Zn(2+). The segment at 1112 to 1184 (SASWLKKFND…EQSAASQEDL (73 aa)) is membrane-binding. The tract at residues 1112 to 1250 (SASWLKKFND…SPGTGKSLAT (139 aa)) is oligomerization. An RNA-binding region spans residues 1133–1137 (SSKIS). One can recognise an SF3 helicase domain in the interval 1216–1374 (EKRMNNYMQF…YKTDLGRLDA (159 aa)). 1240–1247 (GSPGTGKS) contacts ATP. Zn(2+)-binding residues include Cys1381, Cys1392, and Cys1397. The C4-type; degenerate zinc-finger motif lies at 1381–1397 (CTENNTANFKRCSPLVC). Residues 1424–1431 (EYNNRSAI) are RNA-binding. The tract at residues 1435–1440 (IEALFQ) is oligomerization. An intramembrane segment occupies 1504-1519 (SIATVVAVVSLVYVIY). At 1520-2193 (KLFAGFQGAY…NLRRNWLELF (674 aa)) the chain is on the cytoplasmic side. Tyr1529 carries the post-translational modification O-(5'-phospho-RNA)-tyrosine. In terms of domain architecture, Peptidase C3 spans 1549–1727 (GPSLDFALSL…FCAGLKRGYF (179 aa)). Active-site for protease 3C activity residues include His1588, Glu1619, and Cys1695. In terms of domain architecture, RdRp catalytic spans 1958–2074 (GSLFAFDYSG…SYPFPIDCSE (117 aa)). Mg(2+) contacts are provided by Asp1964 and Asp2060.

It belongs to the picornaviruses polyprotein family. In terms of assembly, interacts with capsid protein VP1 and capsid protein VP3 to form heterotrimeric protomers. As to quaternary structure, interacts with capsid protein VP0, and capsid protein VP3 to form heterotrimeric protomers. Five protomers subsequently associate to form pentamers which serve as building blocks for the capsid. Interacts with capsid protein VP2, capsid protein VP3 and capsid protein VP4 following cleavage of capsid protein VP0. Interacts with capsid protein VP1 and capsid protein VP3 in the mature capsid. In terms of assembly, interacts with capsid protein VP0 and capsid protein VP1 to form heterotrimeric protomers. Five protomers subsequently associate to form pentamers which serve as building blocks for the capsid. Interacts with capsid protein VP4 in the mature capsid. Interacts with protein 2C; this interaction may be important for virion morphogenesis. As to quaternary structure, interacts with capsid protein VP1 and capsid protein VP3. Homodimer. In terms of assembly, homohexamer; forms a hexameric ring structure with 6-fold symmetry characteristic of AAA+ ATPases. Interacts (via N-terminus) with host RTN3 (via reticulon domain); this interaction is important for viral replication. Interacts with capsid protein VP3; this interaction may be important for virion morphogenesis. As to quaternary structure, interacts with protein 3CD. Homodimer. Interacts with host GBF1. Interacts (via GOLD domain) with host ACBD3 (via GOLD domain); this interaction allows the formation of a viral protein 3A/ACBD3 heterotetramer with a 2:2 stoichiometry, which will stimulate the recruitment of host PI4KB in order to synthesize PI4P at the viral RNA replication sites. In terms of assembly, interacts with RNA-directed RNA polymerase. As to quaternary structure, interacts with host IFIH1/MDA5; this interaction inhibits host IFIH1. Protein 3CD: Interacts with protein 3AB and with RNA-directed RNA polymerase. In terms of assembly, interacts with Viral protein genome-linked and with protein 3CD. Requires Mg(2+) as cofactor. In terms of processing, specific enzymatic cleavages in vivo by the viral proteases yield processing intermediates and the mature proteins. Myristoylation is required for the formation of pentamers during virus assembly. Further assembly of 12 pentamers and a molecule of genomic RNA generates the provirion. Post-translationally, during virion maturation, immature virions are rendered infectious following cleavage of VP0 into VP4 and VP2. This maturation seems to be an autocatalytic event triggered by the presence of RNA in the capsid and it is followed by a conformational change infectious virion. In terms of processing, myristoylation is required during RNA encapsidation and formation of the mature virus particle. VPg is uridylylated by the polymerase into VPg-pUpU. This acts as a nucleotide-peptide primer for the genomic RNA replication.

The protein resides in the virion. The protein localises to the host cytoplasm. Its subcellular location is the host cytoplasmic vesicle membrane. It is found in the host nucleus. It catalyses the reaction a ribonucleoside 5'-triphosphate + H2O = a ribonucleoside 5'-diphosphate + phosphate + H(+). The enzyme catalyses Selective cleavage of Tyr-|-Gly bond in the picornavirus polyprotein.. It carries out the reaction RNA(n) + a ribonucleoside 5'-triphosphate = RNA(n+1) + diphosphate. The catalysed reaction is Selective cleavage of Gln-|-Gly bond in the poliovirus polyprotein. In other picornavirus reactions Glu may be substituted for Gln, and Ser or Thr for Gly.. Its activity is regulated as follows. Replication or transcription is subject to high level of random mutations by the nucleotide analog ribavirin. Forms an icosahedral capsid of pseudo T=3 symmetry with capsid proteins VP2 and VP3. The capsid is 300 Angstroms in diameter, composed of 60 copies of each capsid protein and enclosing the viral positive strand RNA genome. Capsid protein VP1 mainly forms the vertices of the capsid. Capsid protein VP1 interacts with host cell receptor to provide virion attachment to target host cells. This attachment induces virion internalization. After binding to its receptor, the capsid undergoes conformational changes. Capsid protein VP1 N-terminus (that contains an amphipathic alpha-helix) and capsid protein VP4 are externalized. Together, they shape a pore in the host membrane through which viral genome is translocated to host cell cytoplasm. In terms of biological role, forms an icosahedral capsid of pseudo T=3 symmetry with capsid proteins VP2 and VP3. The capsid is 300 Angstroms in diameter, composed of 60 copies of each capsid protein and enclosing the viral positive strand RNA genome. Functionally, lies on the inner surface of the capsid shell. After binding to the host receptor, the capsid undergoes conformational changes. Capsid protein VP4 is released, Capsid protein VP1 N-terminus is externalized, and together, they shape a pore in the host membrane through which the viral genome is translocated into the host cell cytoplasm. Its function is as follows. Component of immature procapsids, which is cleaved into capsid proteins VP4 and VP2 after maturation. Allows the capsid to remain inactive before the maturation step. Cysteine protease that cleaves viral polyprotein and specific host proteins. It is responsible for the autocatalytic cleavage between the P1 and P2 regions, which is the first cleavage occurring in the polyprotein. Also cleaves the host translation initiation factor EIF4G1, in order to shut down the capped cellular mRNA translation. Inhibits the host nucleus-cytoplasm protein and RNA trafficking by cleaving host members of the nuclear pores. Counteracts stress granule formation probably by antagonizing its assembly or promoting its dissassembly. Cleaves and inhibits host IFIH1/MDA5, thereby inhibiting the type-I IFN production and the establishment of the antiviral state. Cleaves and inhibits host MAVS, thereby inhibiting the type-I IFN production and the establishment of the antiviral state. In terms of biological role, plays an essential role in the virus replication cycle by acting as a viroporin. Creates a pore in the host endoplasmic reticulum and as a consequence releases Ca2+ in the cytoplasm of infected cell. In turn, high levels of cytoplasmic calcium may trigger membrane trafficking and transport of viral ER-associated proteins to viroplasms, sites of viral genome replication. Functionally, induces and associates with structural rearrangements of intracellular membranes. Displays RNA-binding, nucleotide binding and NTPase activities. May play a role in virion morphogenesis and viral RNA encapsidation by interacting with the capsid protein VP3. Its function is as follows. Localizes the viral replication complex to the surface of membranous vesicles. Together with protein 3CD binds the Cis-Active RNA Element (CRE) which is involved in RNA synthesis initiation. Acts as a cofactor to stimulate the activity of 3D polymerase, maybe through a nucleid acid chaperone activity. Localizes the viral replication complex to the surface of membranous vesicles. It inhibits host cell endoplasmic reticulum-to-Golgi apparatus transport and causes the disassembly of the Golgi complex, possibly through GBF1 interaction. This would result in depletion of MHC, trail receptors and IFN receptors at the host cell surface. Plays an essential role in viral RNA replication by recruiting ACBD3 and PI4KB at the viral replication sites, thereby allowing the formation of the rearranged membranous structures where viral replication takes place. In terms of biological role, acts as a primer for viral RNA replication and remains covalently bound to viral genomic RNA. VPg is uridylylated prior to priming replication into VPg-pUpU. The oriI viral genomic sequence may act as a template for this. The VPg-pUpU is then used as primer on the genomic RNA poly(A) by the RNA-dependent RNA polymerase to replicate the viral genome. During genome replication, the VPg-RNA linkage is removed by the host TDP2, thereby accelerating replication. During the late stage of the replication cycle, host TDP2 is excluded from sites of viral RNA synthesis and encapsidation, allowing for the generation of progeny virions. Functionally, involved in the viral replication complex and viral polypeptide maturation. It exhibits protease activity with a specificity and catalytic efficiency that is different from protease 3C. Protein 3CD lacks polymerase activity. Protein 3CD binds to the 5'UTR of the viral genome. Its function is as follows. Major viral protease that mediates proteolytic processing of the polyprotein. Cleaves host EIF5B, contributing to host translation shutoff. Also cleaves host PABPC1, contributing to host translation shutoff. Binds and inhibits host IFIH1/MDA5, thereby inhibiting the type-I IFN production and the establishment of the antiviral state. Cleaves host MAP3K7/TAK1, resulting in inhibition of TRAF6-triggered NF-kappa-B induction. Cleaves host NLRP1, triggers host N-glycine-mediated degradation of the autoinhibitory NLRP1 N-terminal fragment. Replicates the viral genomic RNA on the surface of intracellular membranes. May form linear arrays of subunits that propagate along a strong head-to-tail interaction called interface-I. Covalently attaches UMP to a tyrosine of VPg, which is used to prime RNA synthesis. The positive stranded RNA genome is first replicated at virus induced membranous vesicles, creating a dsRNA genomic replication form. This dsRNA is then used as template to synthesize positive stranded RNA genomes. ss(+)RNA genomes are either translated, replicated or encapsidated. The protein is Genome polyprotein of Homo sapiens (Human).